A 530-amino-acid chain; its full sequence is Arginine--tRNA ligase (530 aa).

The 'HIGH' region signature appears at 113–123 (ANPTGPLHIGH).

This sequence belongs to the class-I aminoacyl-tRNA synthetase family. Monomer.

The protein localises to the cytoplasm. It carries out the reaction tRNA(Arg) + L-arginine + ATP = L-arginyl-tRNA(Arg) + AMP + diphosphate. This is Arginine--tRNA ligase from Campylobacter jejuni subsp. doylei (strain ATCC BAA-1458 / RM4099 / 269.97).